The primary structure comprises 185 residues: Ribosome-recycling factor (185 aa).

This sequence belongs to the RRF family.

The protein localises to the cytoplasm. Functionally, responsible for the release of ribosomes from messenger RNA at the termination of protein biosynthesis. May increase the efficiency of translation by recycling ribosomes from one round of translation to another. In Coxiella burnetii (strain CbuK_Q154) (Coxiella burnetii (strain Q154)), this protein is Ribosome-recycling factor.